Here is a 154-residue protein sequence, read N- to C-terminus: Urease accessory protein UreE (154 aa).

It belongs to the UreE family.

The protein localises to the cytoplasm. Functionally, involved in urease metallocenter assembly. Binds nickel. Probably functions as a nickel donor during metallocenter assembly. This is Urease accessory protein UreE from Escherichia coli O157:H7.